We begin with the raw amino-acid sequence, 775 residues long: Glutamine--tRNA ligase (775 aa).

The residue at position 2 (alanine 2) is an N-acetylalanine. Serine 70 is modified (phosphoserine). The short motif at 270–280 is the 'HIGH' region element; that stretch reads PEPNGILHIGH. Residues 271–273 and 277–283 contribute to the ATP site; these read EPN and HIGHAKA. Aspartate 303 contributes to the L-glutamine binding site. Position 309 is an N6-acetyllysine (lysine 309). Tyrosine 438 is an L-glutamine binding site. Residues threonine 457, 486-487, and 494-496 each bind ATP; these read RL and VSK. A 'KMSKS' region motif is present at residues 493 to 497; that stretch reads VVSKR. Serine 495 is subject to Phosphoserine.

The protein belongs to the class-I aminoacyl-tRNA synthetase family. Monomer. Part of a multisubunit complex that groups tRNA ligases for Arg (RARS1), Asp (DARS1), Gln (QARS1), Ile (IARS1), Leu (LARS1), Lys (KARS1), Met (MARS1) the bifunctional ligase for Glu and Pro (EPRS1) and the auxiliary subunits AIMP1/p43, AIMP2/p38 and EEF1E1/p18. Interacts with RARS1. Part of a complex composed of RARS1, QARS1 and AIMP1.

Its subcellular location is the cytoplasm. The protein localises to the cytosol. It catalyses the reaction tRNA(Gln) + L-glutamine + ATP = L-glutaminyl-tRNA(Gln) + AMP + diphosphate. Functionally, glutamine--tRNA ligase. Plays a critical role in brain development. In Bos taurus (Bovine), this protein is Glutamine--tRNA ligase (QARS1).